The following is a 336-amino-acid chain: Fructose-1,6-bisphosphatase class 1 (336 aa).

Mg(2+) is bound by residues Glu-92, Asp-115, Leu-117, and Asp-118. Substrate contacts are provided by residues 118-121 (DGSS), Asn-211, Tyr-244, 262-264 (YLY), and Lys-274. Glu-280 is a Mg(2+) binding site.

The protein belongs to the FBPase class 1 family. Homotetramer. The cofactor is Mg(2+).

It is found in the cytoplasm. The catalysed reaction is beta-D-fructose 1,6-bisphosphate + H2O = beta-D-fructose 6-phosphate + phosphate. The protein operates within carbohydrate biosynthesis; gluconeogenesis. This Aliivibrio fischeri (strain ATCC 700601 / ES114) (Vibrio fischeri) protein is Fructose-1,6-bisphosphatase class 1.